We begin with the raw amino-acid sequence, 173 residues long: Succinate dehydrogenase assembly factor 3, mitochondrial (173 aa).

The transit peptide at 1-59 (MFRPSTSLALRSTLRQLASASNQPIPPGSEINAVKRTVATILPPIRLYRRIIRAHRRLD) directs the protein to the mitochondrion. Positions 149 to 173 (FPPEKQRELAEKAAADAGLSVKKDE) are disordered. A compositionally biased stretch (basic and acidic residues) spans 152 to 162 (EKQRELAEKAA).

Belongs to the complex I LYR family. SDHAF3 subfamily. In terms of assembly, interacts with the iron-sulfur protein subunit within the SDH catalytic dimer.

The protein resides in the mitochondrion matrix. Its function is as follows. Plays an essential role in the assembly of succinate dehydrogenase (SDH), an enzyme complex (also referred to as respiratory complex II) that is a component of both the tricarboxylic acid (TCA) cycle and the mitochondrial electron transport chain, and which couples the oxidation of succinate to fumarate with the reduction of ubiquinone (coenzyme Q) to ubiquinol. Promotes maturation of the iron-sulfur protein subunit of the SDH catalytic dimer, protecting it from the deleterious effects of oxidants. May act together with SDHAF1. In Mycosarcoma maydis (Corn smut fungus), this protein is Succinate dehydrogenase assembly factor 3, mitochondrial.